Consider the following 369-residue polypeptide: DNA replication and repair protein RecF (369 aa).

30-37 (GPNGSGKT) contributes to the ATP binding site.

The protein belongs to the RecF family.

Its subcellular location is the cytoplasm. The RecF protein is involved in DNA metabolism; it is required for DNA replication and normal SOS inducibility. RecF binds preferentially to single-stranded, linear DNA. It also seems to bind ATP. The sequence is that of DNA replication and repair protein RecF from Chlorobium luteolum (strain DSM 273 / BCRC 81028 / 2530) (Pelodictyon luteolum).